Here is a 481-residue protein sequence, read N- to C-terminus: Vanillin dehydrogenase (481 aa).

NAD(+) is bound at residue 228–233; it reads GSTHVG. Residues glutamate 250 and cysteine 284 contribute to the active site.

The protein belongs to the aldehyde dehydrogenase family.

The catalysed reaction is vanillin + NAD(+) + H2O = vanillate + NADH + 2 H(+). Catalyzes the NAD-dependent oxidation of vanillin to vanillic acid. This is Vanillin dehydrogenase (vdh) from Pseudomonas sp. (strain HR199 / DSM 7063).